The sequence spans 793 residues: MRPRSNAGSSPPDPEEQEHAQVPSFSSTLEQAIHAALALANARRHELATLEHLLLALIDEPDAARVMKACSVDLEDLKKTLTDFIDDDLSTLVTSVEGSEAVPTAAFQRVIQRAAIHVQSSGRTEVTGANVLVAIFAERESNAAYFLQEQDMTRYDAVNFIAHGVAKDPSYGESRPVQGADEPQETPKAEAGEAKESALSKYCVDLNIKARKGDVDPLIGREAEVERAIQVLCRRRKNNPLLVGDPGVGKTAIAEGLAWKIIKKEVPEVLSGATIFSLDMGALLAGTRYRGDFEERLKAVVKELEDHPDAILFIDEIHTVIGAGATSGGAMDASNLLKPALQGGKLRCMGSTTYKEFRQHFEKDRALSRRFQKIDVNEPSVPDAIKILMGLKPHFEEHHELRYTADAIKSAVELASRYINDRKLPDSAIDVIDEAGAAQHLVSDSKRKKVLGTKEIEAVVAKIARIPPRNVSKDDAETLRDLERTLKRLVFGQDKAIEALSASIKLARAGLREPEKPIGNYLFTGPTGVGKTEVAKQLAATLGVELLRFDMSEYMEKHAVSRLIGAPPGYVGFDQGGMLTDGVDQHPHCVLLLDEIEKAHPDVYNILLQVMDHGKLTDHNGRAVDFRNVILIMTSNVGAADMAKEAIGFGRERRTGEDTAAVERTFTPEFRNRLDAVISFAPLGREIILQVVEKFVLQLEAQLIDRNVHIELTPEAAAWLGEKGYDDKMGARPLGRVIQEHIKKPLAEELLFGKLTKGGLVKVGVKDDAIVLEVQEPQKPRLTGQKPPLLTAE.

Residues 1–24 (MRPRSNAGSSPPDPEEQEHAQVPS) are disordered. Residues 22–168 (VPSFSSTLEQ…NFIAHGVAKD (147 aa)) form the Clp R domain. Repeat regions lie at residues 25–88 (FSST…IDDD) and 103–168 (PTAA…VAKD). The segment at 169–194 (PSYGESRPVQGADEPQETPKAEAGEA) is disordered. Positions 185–194 (ETPKAEAGEA) are enriched in basic and acidic residues. The segment at 199–447 (LSKYCVDLNI…AQHLVSDSKR (249 aa)) is i. ATP is bound by residues 244–251 (GDPGVGKT) and 525–532 (GPTGVGKT). The tract at residues 451–639 (LGTKEIEAVV…ILIMTSNVGA (189 aa)) is II.

The protein belongs to the ClpA/ClpB family.

In Fuscovulum blasticum (Rhodobacter blasticus), this protein is ClpA homolog protein.